The following is a 208-amino-acid chain: NAD(P)H-quinone oxidoreductase subunit I (208 aa).

2 4Fe-4S ferredoxin-type domains span residues 55–84 (GRIHYEFDKCIACEVCVRVCPINLPVVDWV) and 95–124 (RNYSIDFGVCIFCGNCVEYCPTNCLSMTEE). 8 residues coordinate [4Fe-4S] cluster: cysteine 64, cysteine 67, cysteine 70, cysteine 74, cysteine 104, cysteine 107, cysteine 110, and cysteine 114.

The protein belongs to the complex I 23 kDa subunit family. As to quaternary structure, NDH-1 is composed of at least 11 different subunits. Requires [4Fe-4S] cluster as cofactor.

The protein localises to the cellular thylakoid membrane. The enzyme catalyses a plastoquinone + NADH + (n+1) H(+)(in) = a plastoquinol + NAD(+) + n H(+)(out). The catalysed reaction is a plastoquinone + NADPH + (n+1) H(+)(in) = a plastoquinol + NADP(+) + n H(+)(out). Functionally, NDH-1 shuttles electrons from an unknown electron donor, via FMN and iron-sulfur (Fe-S) centers, to quinones in the respiratory and/or the photosynthetic chain. The immediate electron acceptor for the enzyme in this species is believed to be plastoquinone. Couples the redox reaction to proton translocation, and thus conserves the redox energy in a proton gradient. In Prochlorococcus marinus (strain MIT 9312), this protein is NAD(P)H-quinone oxidoreductase subunit I.